The sequence spans 205 residues: Urease accessory protein UreG (205 aa).

Residue G14 to T21 coordinates GTP.

Homodimer. UreD, UreF and UreG form a complex that acts as a GTP-hydrolysis-dependent molecular chaperone, activating the urease apoprotein by helping to assemble the nickel containing metallocenter of UreC. The UreE protein probably delivers the nickel.

The protein resides in the cytoplasm. Activation of apourease within the UreDFG-apoprotein complex is inhibited by zinc, copper and cobalt. Facilitates the functional incorporation of the urease nickel metallocenter. This process requires GTP hydrolysis, probably effectuated by UreG. The protein is Urease accessory protein UreG of Klebsiella aerogenes (Enterobacter aerogenes).